Reading from the N-terminus, the 562-residue chain is Formate--tetrahydrofolate ligase (562 aa).

71 to 78 (TPAGEGKS) contributes to the ATP binding site.

The protein belongs to the formate--tetrahydrofolate ligase family.

It catalyses the reaction (6S)-5,6,7,8-tetrahydrofolate + formate + ATP = (6R)-10-formyltetrahydrofolate + ADP + phosphate. Its pathway is one-carbon metabolism; tetrahydrofolate interconversion. This Bacillus cereus (strain Q1) protein is Formate--tetrahydrofolate ligase.